The chain runs to 469 residues: 3-isopropylmalate dehydratase large subunit (469 aa).

Residues Cys-349, Cys-410, and Cys-413 each contribute to the [4Fe-4S] cluster site.

This sequence belongs to the aconitase/IPM isomerase family. LeuC type 1 subfamily. In terms of assembly, heterodimer of LeuC and LeuD. It depends on [4Fe-4S] cluster as a cofactor.

It carries out the reaction (2R,3S)-3-isopropylmalate = (2S)-2-isopropylmalate. The protein operates within amino-acid biosynthesis; L-leucine biosynthesis; L-leucine from 3-methyl-2-oxobutanoate: step 2/4. Functionally, catalyzes the isomerization between 2-isopropylmalate and 3-isopropylmalate, via the formation of 2-isopropylmaleate. This Neisseria gonorrhoeae (strain NCCP11945) protein is 3-isopropylmalate dehydratase large subunit.